The chain runs to 166 residues: Macrocypin-5a (166 aa).

The segment at asparagine 20–alanine 39 is disordered.

It belongs to the protease inhibitor I85 family.

In terms of biological role, inhibits papain and cysteine cathepsin endopeptidases, and also inhibits cathepsins B and H, which exhibit both exopeptidase and endopeptidase activities. The sequence is that of Macrocypin-5a from Macrolepiota procera (Parasol mushroom).